A 447-amino-acid polypeptide reads, in one-letter code: Adenylosuccinate synthetase (447 aa).

Residues 35–41 and 63–65 contribute to the GTP site; these read GDEGKGK and GHT. Catalysis depends on D36, which acts as the Proton acceptor. D36 and G63 together coordinate Mg(2+). IMP contacts are provided by residues 36-39, 61-64, T153, R167, N245, T260, and R324; these read DEGK and NAGH. H64 acts as the Proton donor in catalysis. Substrate is bound at residue 320 to 326; the sequence is VTTKRKR. GTP-binding positions include R326, 352-354, and 435-437; these read KLD and GVG.

Belongs to the adenylosuccinate synthetase family. In terms of assembly, homodimer. Mg(2+) is required as a cofactor.

It localises to the cytoplasm. The catalysed reaction is IMP + L-aspartate + GTP = N(6)-(1,2-dicarboxyethyl)-AMP + GDP + phosphate + 2 H(+). It functions in the pathway purine metabolism; AMP biosynthesis via de novo pathway; AMP from IMP: step 1/2. Its function is as follows. Plays an important role in the de novo pathway and in the salvage pathway of purine nucleotide biosynthesis. Catalyzes the first committed step in the biosynthesis of AMP from IMP. Plays a role in the regulation of adult life span. This Drosophila melanogaster (Fruit fly) protein is Adenylosuccinate synthetase.